Reading from the N-terminus, the 425-residue chain is Glucose-1-phosphate adenylyltransferase (425 aa).

Alpha-D-glucose 1-phosphate-binding positions include Tyr-110, Gly-175, 190-191, and Ser-208; that span reads EK.

Belongs to the bacterial/plant glucose-1-phosphate adenylyltransferase family. As to quaternary structure, homotetramer.

The enzyme catalyses alpha-D-glucose 1-phosphate + ATP + H(+) = ADP-alpha-D-glucose + diphosphate. The protein operates within glycan biosynthesis; glycogen biosynthesis. In terms of biological role, involved in the biosynthesis of ADP-glucose, a building block required for the elongation reactions to produce glycogen. Catalyzes the reaction between ATP and alpha-D-glucose 1-phosphate (G1P) to produce pyrophosphate and ADP-Glc. This chain is Glucose-1-phosphate adenylyltransferase, found in Nitrosospira multiformis (strain ATCC 25196 / NCIMB 11849 / C 71).